The chain runs to 429 residues: Serine--tRNA ligase (429 aa).

L-serine is bound at residue 235-237; that stretch reads TAE. Residue 266 to 268 coordinates ATP; sequence RSE. E289 serves as a coordination point for L-serine. Residue 353-356 participates in ATP binding; that stretch reads EISS. Residue S389 participates in L-serine binding.

It belongs to the class-II aminoacyl-tRNA synthetase family. Type-1 seryl-tRNA synthetase subfamily. Homodimer. The tRNA molecule binds across the dimer.

The protein resides in the cytoplasm. The catalysed reaction is tRNA(Ser) + L-serine + ATP = L-seryl-tRNA(Ser) + AMP + diphosphate + H(+). It catalyses the reaction tRNA(Sec) + L-serine + ATP = L-seryl-tRNA(Sec) + AMP + diphosphate + H(+). It participates in aminoacyl-tRNA biosynthesis; selenocysteinyl-tRNA(Sec) biosynthesis; L-seryl-tRNA(Sec) from L-serine and tRNA(Sec): step 1/1. Catalyzes the attachment of serine to tRNA(Ser). Is also able to aminoacylate tRNA(Sec) with serine, to form the misacylated tRNA L-seryl-tRNA(Sec), which will be further converted into selenocysteinyl-tRNA(Sec). This Haemophilus influenzae (strain 86-028NP) protein is Serine--tRNA ligase.